Reading from the N-terminus, the 554-residue chain is Glucose-6-phosphate isomerase (554 aa).

The active-site Proton donor is the glutamate 359. Catalysis depends on residues histidine 390 and lysine 518.

It belongs to the GPI family.

The protein localises to the cytoplasm. The enzyme catalyses alpha-D-glucose 6-phosphate = beta-D-fructose 6-phosphate. The protein operates within carbohydrate biosynthesis; gluconeogenesis. Its pathway is carbohydrate degradation; glycolysis; D-glyceraldehyde 3-phosphate and glycerone phosphate from D-glucose: step 2/4. In terms of biological role, catalyzes the reversible isomerization of glucose-6-phosphate to fructose-6-phosphate. The protein is Glucose-6-phosphate isomerase of Pseudomonas fluorescens.